Here is a 370-residue protein sequence, read N- to C-terminus: Probable aspartic-type endopeptidase ARB_04018 (370 aa).

Residues 1–21 (MWHSPFSTAFTLFLGFFTLTL) form the signal peptide. N-linked (GlcNAc...) asparagine glycans are attached at residues Asn-80 and Asn-102. Residues 94–367 (FVNEITIGND…DHDGPKMGFA (274 aa)) enclose the Peptidase A1 domain. Asp-110 is an active-site residue. Asn-251 carries N-linked (GlcNAc...) asparagine glycosylation. The active site involves Asp-261. N-linked (GlcNAc...) asparagine glycosylation occurs at Asn-298.

Belongs to the peptidase A1 family.

The protein localises to the secreted. Its function is as follows. Probable aspartic-type endopeptidase which contributes to virulence. The sequence is that of Probable aspartic-type endopeptidase ARB_04018 from Arthroderma benhamiae (strain ATCC MYA-4681 / CBS 112371) (Trichophyton mentagrophytes).